A 277-amino-acid chain; its full sequence is Sulfur carrier protein FdhD (277 aa).

Catalysis depends on C121, which acts as the Cysteine persulfide intermediate. A Mo-bis(molybdopterin guanine dinucleotide)-binding site is contributed by 260–265; the sequence is FCKPGR.

Belongs to the FdhD family.

The protein resides in the cytoplasm. In terms of biological role, required for formate dehydrogenase (FDH) activity. Acts as a sulfur carrier protein that transfers sulfur from IscS to the molybdenum cofactor prior to its insertion into FDH. This is Sulfur carrier protein FdhD from Escherichia coli O6:K15:H31 (strain 536 / UPEC).